We begin with the raw amino-acid sequence, 735 residues long: Ribosomal protein S6 kinase alpha-1 (735 aa).

Residue serine 54 is modified to Phosphoserine. One can recognise a Protein kinase 1 domain in the interval 62–321 (FELLKVLGQG…AEEIKRHVFY (260 aa)). ATP is bound by residues 68-76 (LGQGSFGKV) and lysine 94. The Proton acceptor role is filled by aspartate 187. At serine 221 the chain carries Phosphoserine; by PDPK1. Position 307 is a phosphoserine (serine 307). One can recognise an AGC-kinase C-terminal domain in the interval 322 to 391 (STIDWNKLYR…VATGLMEDDG (70 aa)). The residue at position 359 (threonine 359) is a Phosphothreonine. Serine 363 and serine 369 each carry phosphoserine. Phosphoserine; by autocatalysis is present on serine 380. The 258-residue stretch at 418-675 (YVVKETIGVG…AKQVLQHPWV (258 aa)) folds into the Protein kinase 2 domain. ATP is bound by residues 424-432 (IGVGSYSEC) and lysine 447. Aspartate 535 functions as the Proton acceptor in the catalytic mechanism. At threonine 573 the chain carries Phosphothreonine. Serine 732 is subject to Phosphoserine.

It belongs to the protein kinase superfamily. AGC Ser/Thr protein kinase family. S6 kinase subfamily. In terms of assembly, forms a complex with either MAPK1/ERK2 or MAPK3/ERK1 in quiescent cells. Transiently dissociates following mitogenic stimulation. Interacts with ETV1/ER81 and FGFR1. As to quaternary structure, (Microbial infection) Interacts with Kaposi's sarcoma-associated herpesvirus/HHV-8 protein ORF45; this interaction allows RPS6KA1 activation. The cofactor is Mg(2+). Post-translationally, activated by phosphorylation at Ser-221 by PDPK1. Autophosphorylated on Ser-380, as part of the activation process. May be phosphorylated at Thr-359 and Ser-363 by MAPK1/ERK2 and MAPK3/ERK1. In terms of processing, N-terminal myristoylation results in an activated kinase in the absence of added growth factors.

Its subcellular location is the nucleus. It localises to the cytoplasm. It catalyses the reaction L-seryl-[protein] + ATP = O-phospho-L-seryl-[protein] + ADP + H(+). The catalysed reaction is L-threonyl-[protein] + ATP = O-phospho-L-threonyl-[protein] + ADP + H(+). With respect to regulation, upon extracellular signal or mitogen stimulation, phosphorylated at Thr-573 in the C-terminal kinase domain (CTKD) by MAPK1/ERK2 and MAPK3/ERK1. The activated CTKD then autophosphorylates Ser-380, allowing binding of PDPK1, which in turn phosphorylates Ser-221 in the N-terminal kinase domain (NTDK) leading to the full activation of the protein and subsequent phosphorylation of the substrates by the NTKD. Serine/threonine-protein kinase that acts downstream of ERK (MAPK1/ERK2 and MAPK3/ERK1) signaling and mediates mitogenic and stress-induced activation of the transcription factors CREB1, ETV1/ER81 and NR4A1/NUR77, regulates translation through RPS6 and EIF4B phosphorylation, and mediates cellular proliferation, survival, and differentiation by modulating mTOR signaling and repressing pro-apoptotic function of BAD and DAPK1. In fibroblast, is required for EGF-stimulated phosphorylation of CREB1, which results in the subsequent transcriptional activation of several immediate-early genes. In response to mitogenic stimulation (EGF and PMA), phosphorylates and activates NR4A1/NUR77 and ETV1/ER81 transcription factors and the cofactor CREBBP. Upon insulin-derived signal, acts indirectly on the transcription regulation of several genes by phosphorylating GSK3B at 'Ser-9' and inhibiting its activity. Phosphorylates RPS6 in response to serum or EGF via an mTOR-independent mechanism and promotes translation initiation by facilitating assembly of the pre-initiation complex. In response to insulin, phosphorylates EIF4B, enhancing EIF4B affinity for the EIF3 complex and stimulating cap-dependent translation. Is involved in the mTOR nutrient-sensing pathway by directly phosphorylating TSC2 at 'Ser-1798', which potently inhibits TSC2 ability to suppress mTOR signaling, and mediates phosphorylation of RPTOR, which regulates mTORC1 activity and may promote rapamycin-sensitive signaling independently of the PI3K/AKT pathway. Also involved in feedback regulation of mTORC1 and mTORC2 by phosphorylating DEPTOR. Mediates cell survival by phosphorylating the pro-apoptotic proteins BAD and DAPK1 and suppressing their pro-apoptotic function. Promotes the survival of hepatic stellate cells by phosphorylating CEBPB in response to the hepatotoxin carbon tetrachloride (CCl4). Mediates induction of hepatocyte prolifration by TGFA through phosphorylation of CEBPB. Is involved in cell cycle regulation by phosphorylating the CDK inhibitor CDKN1B, which promotes CDKN1B association with 14-3-3 proteins and prevents its translocation to the nucleus and inhibition of G1 progression. Phosphorylates EPHA2 at 'Ser-897', the RPS6KA-EPHA2 signaling pathway controls cell migration. In response to mTORC1 activation, phosphorylates EIF4B at 'Ser-406' and 'Ser-422' which stimulates bicarbonate cotransporter SLC4A7 mRNA translation, increasing SLC4A7 protein abundance and function. Functionally, (Microbial infection) Promotes the late transcription and translation of viral lytic genes during Kaposi's sarcoma-associated herpesvirus/HHV-8 infection, when constitutively activated. This chain is Ribosomal protein S6 kinase alpha-1 (RPS6KA1), found in Homo sapiens (Human).